The sequence spans 541 residues: Glutamyl-tRNA(Gln) amidotransferase subunit B, mitochondrial (541 aa).

This sequence belongs to the GatB/GatE family. GatB subfamily. In terms of assembly, subunit of the heterotrimeric GatFAB amidotransferase (AdT) complex, composed of A, B and F subunits.

The protein localises to the mitochondrion. The enzyme catalyses L-glutamyl-tRNA(Gln) + L-glutamine + ATP + H2O = L-glutaminyl-tRNA(Gln) + L-glutamate + ADP + phosphate + H(+). Functionally, allows the formation of correctly charged Gln-tRNA(Gln) through the transamidation of misacylated Glu-tRNA(Gln) in the mitochondria. The reaction takes place in the presence of glutamine and ATP through an activated gamma-phospho-Glu-tRNA(Gln). In Saccharomyces cerevisiae (strain YJM789) (Baker's yeast), this protein is Glutamyl-tRNA(Gln) amidotransferase subunit B, mitochondrial.